Here is a 104-residue protein sequence, read N- to C-terminus: UPF0235 protein MTH_637 (104 aa).

It belongs to the UPF0235 family.

This chain is UPF0235 protein MTH_637, found in Methanothermobacter thermautotrophicus (strain ATCC 29096 / DSM 1053 / JCM 10044 / NBRC 100330 / Delta H) (Methanobacterium thermoautotrophicum).